A 379-amino-acid polypeptide reads, in one-letter code: Cytochrome b (379 aa).

Helical transmembrane passes span 34–54 (LGSL…FLTM), 78–99 (WLIR…YLHV), 114–134 (WMTG…GYVL), and 179–199 (FYTF…IHLF). Heme b-binding residues include histidine 84 and histidine 98. Heme b-binding residues include histidine 183 and histidine 197. An a ubiquinone-binding site is contributed by histidine 202. 4 helical membrane passes run 227–247 (YKDM…CLID), 289–309 (LGGV…PFYN), 321–341 (MNQI…WIGK), and 348–368 (YIMT…FNVH).

It belongs to the cytochrome b family. In terms of assembly, the main subunits of complex b-c1 are: cytochrome b, cytochrome c1 and the Rieske protein. Heme b is required as a cofactor.

The protein localises to the mitochondrion inner membrane. Its function is as follows. Component of the ubiquinol-cytochrome c reductase complex (complex III or cytochrome b-c1 complex) that is part of the mitochondrial respiratory chain. The b-c1 complex mediates electron transfer from ubiquinol to cytochrome c. Contributes to the generation of a proton gradient across the mitochondrial membrane that is then used for ATP synthesis. The sequence is that of Cytochrome b (MT-CYB) from Locusta migratoria (Migratory locust).